Reading from the N-terminus, the 388-residue chain is Chorismate synthase (388 aa).

Residues R39 and R45 each contribute to the NADP(+) site. Residues 130-132 (RSS), 251-252 (NA), A296, 311-315 (KPIPT), and R337 contribute to the FMN site.

The protein belongs to the chorismate synthase family. As to quaternary structure, homotetramer. The cofactor is FMNH2.

It catalyses the reaction 5-O-(1-carboxyvinyl)-3-phosphoshikimate = chorismate + phosphate. It participates in metabolic intermediate biosynthesis; chorismate biosynthesis; chorismate from D-erythrose 4-phosphate and phosphoenolpyruvate: step 7/7. In terms of biological role, catalyzes the anti-1,4-elimination of the C-3 phosphate and the C-6 proR hydrogen from 5-enolpyruvylshikimate-3-phosphate (EPSP) to yield chorismate, which is the branch point compound that serves as the starting substrate for the three terminal pathways of aromatic amino acid biosynthesis. This reaction introduces a second double bond into the aromatic ring system. The polypeptide is Chorismate synthase (Streptococcus equi subsp. equi (strain 4047)).